We begin with the raw amino-acid sequence, 449 residues long: Tubulin alpha chain (449 aa).

The MREC motif signature appears at 1-4 (MREC). Position 11 (Q11) interacts with GTP. Position 40 is an N6-acetyllysine (K40). GTP-binding residues include E71, S140, G144, T145, T179, N206, and N228. E71 lines the Mg(2+) pocket. The active site involves E254. E443 is subject to 5-glutamyl polyglutamate.

Belongs to the tubulin family. As to quaternary structure, dimer of alpha and beta chains. A typical microtubule is a hollow water-filled tube with an outer diameter of 25 nm and an inner diameter of 15 nM. Alpha-beta heterodimers associate head-to-tail to form protofilaments running lengthwise along the microtubule wall with the beta-tubulin subunit facing the microtubule plus end conferring a structural polarity. Microtubules usually have 13 protofilaments but different protofilament numbers can be found in some organisms and specialized cells. Mg(2+) is required as a cofactor. Post-translationally, some glutamate residues at the C-terminus are polyglycylated, resulting in polyglycine chains on the gamma-carboxyl group. Glycylation is mainly limited to tubulin incorporated into axonemes (cilia and flagella) whereas glutamylation is prevalent in neuronal cells, centrioles, axonemes, and the mitotic spindle. Both modifications can coexist on the same protein on adjacent residues, and lowering polyglycylation levels increases polyglutamylation, and reciprocally. The precise function of polyglycylation is still unclear. Some glutamate residues at the C-terminus are polyglutamylated, resulting in polyglutamate chains on the gamma-carboxyl group. Polyglutamylation plays a key role in microtubule severing by spastin (SPAST). SPAST preferentially recognizes and acts on microtubules decorated with short polyglutamate tails: severing activity by SPAST increases as the number of glutamates per tubulin rises from one to eight, but decreases beyond this glutamylation threshold. In terms of processing, acetylation of alpha chains at Lys-40 is located inside the microtubule lumen. This modification has been correlated with increased microtubule stability, intracellular transport and ciliary assembly. Post-translationally, undergoes a tyrosination/detyrosination cycle, the cyclic removal and re-addition of a C-terminal tyrosine residue by the enzymes tubulin tyrosine carboxypeptidase (MATCAP1, VASH1 or VASH2) and tubulin tyrosine ligase (TTL), respectively. Tyrosination promotes microtubule interaction with CAP-Gly microtubule plus-end tracking proteins. Tyrosinated tubulins regulate the initiation of dynein-driven motility. In terms of processing, detyrosination is involved in metaphase plate congression by guiding chromosomes during mitosis. Detyrosination increases microtubules-dependent mechanotransduction in dystrophic cardiac and skeletal muscle. In cardiomyocytes, detyrosinated microtubules are required to resist to contractile compression during contraction.

It localises to the cytoplasm. The protein localises to the cytoskeleton. It carries out the reaction GTP + H2O = GDP + phosphate + H(+). In terms of biological role, tubulin is the major constituent of microtubules, a cylinder consisting of laterally associated linear protofilaments composed of alpha- and beta-tubulin heterodimers. Microtubules grow by the addition of GTP-tubulin dimers to the microtubule end, where a stabilizing cap forms. Below the cap, tubulin dimers are in GDP-bound state, owing to GTPase activity of alpha-tubulin. The polypeptide is Tubulin alpha chain (tuba) (Xenopus tropicalis (Western clawed frog)).